The following is a 342-amino-acid chain: 4-hydroxy-2-oxovalerate aldolase (342 aa).

The Pyruvate carboxyltransferase domain occupies 7-257; the sequence is IWITEVALRD…KTGVDLYKMM (251 aa). 15-16 lines the substrate pocket; sequence RD. Mn(2+) is bound at residue Asp16. His19 functions as the Proton acceptor in the catalytic mechanism. Ser169 and His196 together coordinate substrate. The Mn(2+) site is built by His196 and His198. Tyr287 is a binding site for substrate.

Belongs to the 4-hydroxy-2-oxovalerate aldolase family.

It catalyses the reaction (S)-4-hydroxy-2-oxopentanoate = acetaldehyde + pyruvate. The sequence is that of 4-hydroxy-2-oxovalerate aldolase (nbaI) from Geobacillus thermodenitrificans (strain NG80-2).